The following is a 418-amino-acid chain: Glucose-1-phosphate adenylyltransferase (418 aa).

Alpha-D-glucose 1-phosphate contacts are provided by residues Tyr-104, Gly-169, 184 to 185 (EK), and Ser-202.

It belongs to the bacterial/plant glucose-1-phosphate adenylyltransferase family. As to quaternary structure, homotetramer.

The catalysed reaction is alpha-D-glucose 1-phosphate + ATP + H(+) = ADP-alpha-D-glucose + diphosphate. It functions in the pathway glycan biosynthesis; glycogen biosynthesis. Functionally, involved in the biosynthesis of ADP-glucose, a building block required for the elongation reactions to produce glycogen. Catalyzes the reaction between ATP and alpha-D-glucose 1-phosphate (G1P) to produce pyrophosphate and ADP-Glc. In Jannaschia sp. (strain CCS1), this protein is Glucose-1-phosphate adenylyltransferase.